The sequence spans 1378 residues: DNA-directed RNA polymerase subunit beta (1378 aa).

This sequence belongs to the RNA polymerase beta chain family. The RNAP catalytic core consists of 2 alpha, 1 beta, 1 beta' and 1 omega subunit. When a sigma factor is associated with the core the holoenzyme is formed, which can initiate transcription.

The catalysed reaction is RNA(n) + a ribonucleoside 5'-triphosphate = RNA(n+1) + diphosphate. In terms of biological role, DNA-dependent RNA polymerase catalyzes the transcription of DNA into RNA using the four ribonucleoside triphosphates as substrates. This chain is DNA-directed RNA polymerase subunit beta, found in Campylobacter jejuni subsp. jejuni serotype O:23/36 (strain 81-176).